Reading from the N-terminus, the 384-residue chain is Opsin-3 (384 aa).

The Extracellular portion of the chain corresponds to 1–62; it reads MATNFTQELY…VSKYWHYVLA (62 aa). Residue Asn-4 is glycosylated (N-linked (GlcNAc...) asparagine). The chain crosses the membrane as a helical span at residues 63 to 83; the sequence is LIYTMLMVTSLTGNGIVIWIF. Residues 84–94 are Cytoplasmic-facing; the sequence is STSKSLRSASN. The chain crosses the membrane as a helical span at residues 95–115; that stretch reads MFVINLAVFDLMMMLEMPLLI. The Extracellular portion of the chain corresponds to 116–132; the sequence is MNSFYQRLVGYQLGCDV. The cysteines at positions 130 and 207 are disulfide-linked. Residues 133 to 153 traverse the membrane as a helical segment; it reads YAVLGSLSGIGGAITNAVIAF. The Cytoplasmic portion of the chain corresponds to 154-171; it reads DRYKTISSPLDGRINTVQ. The helical transmembrane segment at 172–192 threads the bilayer; sequence AGLLIAFTWFWALPFTILPAF. The Extracellular portion of the chain corresponds to 193-219; that stretch reads RIWGRFVPEGFLTTCSFDYFTEDQDTE. The helical transmembrane segment at 220-240 threads the bilayer; that stretch reads VFVACIFVWSYCIPMALICYF. The Cytoplasmic segment spans residues 241–284; sequence YSQLFGAVRLHERMLQEQAKKMNVKSLASNKEDNSRSVEIRIAK. A helical membrane pass occupies residues 285–305; it reads VAFTIFFLFICAWTPYAFVTM. The Extracellular portion of the chain corresponds to 306 to 312; it reads TGAFGDR. The chain crosses the membrane as a helical span at residues 313–333; the sequence is TLLTPIATMIPAVCCKVVSCI. Over 334–384 the chain is Cytoplasmic; that stretch reads DPWVYAINHPRYRAELQKRLPWMGVREQDPDAVSTTTSVATAGFQPPAAEA.

It belongs to the G-protein coupled receptor 1 family. Opsin subfamily. As to expression, in the retina, expression is essentially uniformly distributed but a higher level is seen in the ventral region where the B-cells are localized.

It is found in the membrane. Functionally, visual pigments are the light-absorbing molecules that mediate vision. They consist of an apoprotein, opsin, covalently linked to cis-retinal. May play a role in photoperiodic photoreception. This Manduca sexta (Tobacco hawkmoth) protein is Opsin-3 (OP3).